The following is a 611-amino-acid chain: Glutamine--fructose-6-phosphate aminotransferase [isomerizing] (611 aa).

Catalysis depends on C2, which acts as the Nucleophile; for GATase activity. The region spanning 2 to 219 is the Glutamine amidotransferase type-2 domain; sequence CGIVGAVAER…EGDIAEIRRD (218 aa). SIS domains are found at residues 287-427 and 460-601; these read AAEL…VKGS and VAEL…VDQP. Catalysis depends on K606, which acts as the For Fru-6P isomerization activity.

In terms of assembly, homodimer.

It localises to the cytoplasm. The catalysed reaction is D-fructose 6-phosphate + L-glutamine = D-glucosamine 6-phosphate + L-glutamate. In terms of biological role, catalyzes the first step in hexosamine metabolism, converting fructose-6P into glucosamine-6P using glutamine as a nitrogen source. The polypeptide is Glutamine--fructose-6-phosphate aminotransferase [isomerizing] (Pseudomonas syringae pv. tomato (strain ATCC BAA-871 / DC3000)).